A 150-amino-acid polypeptide reads, in one-letter code: uncharacterized protein (150 aa).

Transmembrane regions (helical) follow at residues 48–68 (LFLL…CFLF), 89–109 (VFIF…YLLP), and 123–143 (REVF…IFTL).

The protein to M.pneumoniae MPN_085 central region.

It localises to the cell membrane. This is an uncharacterized protein from Mycoplasma pneumoniae (strain ATCC 29342 / M129 / Subtype 1) (Mycoplasmoides pneumoniae).